Here is a 545-residue protein sequence, read N- to C-terminus: Reticulon-2 (545 aa).

Disordered regions lie at residues 1–183 (MGQV…ETGE) and 199–250 (SPEV…EREP). Residues 14 to 25 (APSTASSTPDST) are compositionally biased toward low complexity. The span at 32 to 43 (SDFRELHTAREF) shows a compositional bias: basic and acidic residues. The residue at position 44 (serine 44) is a Phosphoserine. Over residues 135-146 (RPLEDLRLRLDH) the composition is skewed to basic and acidic residues. A compositionally biased stretch (low complexity) spans 157-166 (GEDSSTSSST). The span at 199-230 (SPEVLTPQLSPGSGTPQAGTPSPSRSRDSNSG) shows a compositional bias: polar residues. Serine 227 and serine 229 each carry phosphoserine. Residues 345–545 (VADLLYWKDT…AVSGSKAKAE (201 aa)) enclose the Reticulon domain. 2 helical membrane-spanning segments follow: residues 368 to 388 (LLCLLHFSIVSVAAHLALLLL) and 463 to 483 (LLFYILTFVGAIFNGLTLLIL).

As to quaternary structure, interacts with isoform 1 but not isoform 3 of SPAST. Interacts with BACE1. Interacts (via first transmembrane domain) with ARL6IP5/GTRAP3-18. Interacts (via N-terminus) with SLC1A1/EAAC1; the interaction promotes cell surface expression of SLC1A1. In terms of assembly, interacts with TMEM33. Highly expressed in skeletal muscle.

The protein resides in the endoplasmic reticulum membrane. It is found in the sarcoplasmic reticulum membrane. The protein localises to the cell membrane. It localises to the sarcolemma. Its subcellular location is the T-tubule. The protein resides in the cytoplasm. It is found in the myofibril. The protein localises to the sarcomere. It localises to the z line. Its subcellular location is the cytoskeleton. In terms of biological role, inhibits amyloid precursor protein processing, probably by blocking BACE1 activity. Enhances trafficking of the glutamate transporter SLC1A1/EAAC1 from the endoplasmic reticulum to the cell surface. Plays a role in the translocation of SLC2A4/GLUT4 from intracellular membranes to the cell membrane which facilitates the uptake of glucose into the cell. The polypeptide is Reticulon-2 (RTN2) (Homo sapiens (Human)).